The primary structure comprises 431 residues: Transmembrane protease serine 11C (431 aa).

Residues 1–33 are Cytoplasmic-facing; that stretch reads MARGQPRRSEEQWTALQNRTECKTKIKLTRCGK. Residues 34–54 form a helical; Signal-anchor for type II membrane protein membrane-spanning segment; sequence ITLGILTAVLAAVLIGLIAYF. The Extracellular portion of the chain corresponds to 55–431; that stretch reads AACGKDSFYY…RDWITSKTGL (377 aa). Positions 60 to 177 constitute an SEA domain; the sequence is DSFYYHVSFK…SSFKFSDIAM (118 aa). Asparagine 99 carries N-linked (GlcNAc...) asparagine glycosylation. Positions 200–430 constitute a Peptidase S1 domain; the sequence is VAGGQDAEEG…YRDWITSKTG (231 aa). Cysteine 225 and cysteine 241 are disulfide-bonded. Histidine 240 functions as the Charge relay system in the catalytic mechanism. An N-linked (GlcNAc...) asparagine glycan is attached at asparagine 276. Residue aspartate 285 is the Charge relay system of the active site. A glycan (N-linked (GlcNAc...) asparagine) is linked at asparagine 347. 2 disulfides stabilise this stretch: cysteine 350–cysteine 366 and cysteine 377–cysteine 406. Serine 381 functions as the Charge relay system in the catalytic mechanism.

Belongs to the peptidase S1 family. Proteolytically cleaved via an autocatalytic mechanism. In terms of tissue distribution, expressed specifically in Purkinje neurons of the cerebellum (at protein level). Also detected in spinal cord.

Its subcellular location is the cell membrane. The protein resides in the cell projection. It localises to the dendrite. The protein localises to the perikaryon. In terms of biological role, serine protease which has a preference for Arg or Lys in position P1 and uncharged residues in positions P2 and P3. Shows specificity towards FGF2 in vitro. The protein is Transmembrane protease serine 11C of Mus musculus (Mouse).